The primary structure comprises 426 residues: Chromatin structure-remodeling complex subunit SFH1 (426 aa).

Phosphoserine is present on S78. Residues 201-242 (AIMIPITLDIEHMGHTIKDQFLWNYNDDSISPEEFASIYCKD) are interaction with STH1.

This sequence belongs to the SNF5 family. As to quaternary structure, interacts directly with STH1. Component of the two forms of the RSC complex composed of at least either RSC1 or RSC2, and ARP7, ARP9, LDB7, NPL6, RSC3, RSC30, RSC4, RSC58, RSC6, RSC8, RSC9, SFH1, STH1, HTL1 and probably RTT102. The complexes interact with histone and histone variant components of centromeric chromatin. Post-translationally, phosphorylated in the G1 phase.

It localises to the nucleus. In terms of biological role, component of the chromatin structure-remodeling complex (RSC), which is involved in transcription regulation and nucleosome positioning. RSC is responsible for the transfer of a histone octamer from a nucleosome core particle to naked DNA. The reaction requires ATP and involves an activated RSC-nucleosome intermediate. Remodeling reaction also involves DNA translocation, DNA twist and conformational change. As a reconfigurer of centromeric and flanking nucleosomes, RSC complex is required both for proper kinetochore function in chromosome segregation and, via a PKC1-dependent signaling pathway, for organization of the cellular cytoskeleton. This subunit is essential for mitotic growth and required for cell cycle progression. This Saccharomyces cerevisiae (strain ATCC 204508 / S288c) (Baker's yeast) protein is Chromatin structure-remodeling complex subunit SFH1 (SFH1).